We begin with the raw amino-acid sequence, 118 residues long: Hisactophilin-2 (118 aa).

G2 is lipidated: N-myristoyl glycine. The contains several HHXH repeats stretch occupies residues 8 to 109 (AHNGHYLSAE…HVSTSHHHDH (102 aa)). 2 repeat units span residues 34-46 (FHIE…VALR) and 74-86 (FHLE…VSIK). A 2 X 13 AA approximate repeats region spans residues 34 to 86 (FHIENHGSKVALRTHCGKYVSIGDHKQVYLSHHLHGDHSLFHLEHHHGKVSIK). The interval 99-118 (GHVSTSHHHDHHATFEEHIL) is disordered.

Belongs to the hisactophilin family. As to quaternary structure, homodimer or heterodimer of hatA and hatB, linked by a disulfide bond. In terms of processing, phosphorylated.

The protein localises to the cytoplasm. It is found in the cell membrane. May act as an intracellular pH sensor that links chemotactic signals to responses in the microfilament system of the cells by nucleating actin polymerization or stabilizing the filaments. This chain is Hisactophilin-2 (hatB), found in Dictyostelium discoideum (Social amoeba).